Consider the following 257-residue polypeptide: Glutamate racemase (257 aa).

Substrate contacts are provided by residues 12 to 13 and 44 to 45; these read DS and YG. Catalysis depends on Cys75, which acts as the Proton donor/acceptor. Residue 76-77 coordinates substrate; the sequence is NT. The active-site Proton donor/acceptor is the Cys185. Position 186–187 (186–187) interacts with substrate; that stretch reads TH.

The protein belongs to the aspartate/glutamate racemases family.

It carries out the reaction L-glutamate = D-glutamate. Its pathway is cell wall biogenesis; peptidoglycan biosynthesis. Functionally, provides the (R)-glutamate required for cell wall biosynthesis. The polypeptide is Glutamate racemase (Clostridium botulinum (strain Okra / Type B1)).